The sequence spans 322 residues: tRNA uridine(34) hydroxylase (322 aa).

One can recognise a Rhodanese domain in the interval 126-220 (LAEDTVVIDA…YGKDPEVKGE (95 aa)). Cys-180 (cysteine persulfide intermediate) is an active-site residue.

The protein belongs to the TrhO family.

It catalyses the reaction uridine(34) in tRNA + AH2 + O2 = 5-hydroxyuridine(34) in tRNA + A + H2O. Its function is as follows. Catalyzes oxygen-dependent 5-hydroxyuridine (ho5U) modification at position 34 in tRNAs. The polypeptide is tRNA uridine(34) hydroxylase (Shouchella clausii (strain KSM-K16) (Alkalihalobacillus clausii)).